Consider the following 248-residue polypeptide: tRNA1(Val) (adenine(37)-N6)-methyltransferase (248 aa).

This sequence belongs to the methyltransferase superfamily. tRNA (adenine-N(6)-)-methyltransferase family.

It is found in the cytoplasm. The enzyme catalyses adenosine(37) in tRNA1(Val) + S-adenosyl-L-methionine = N(6)-methyladenosine(37) in tRNA1(Val) + S-adenosyl-L-homocysteine + H(+). Its function is as follows. Specifically methylates the adenine in position 37 of tRNA(1)(Val) (anticodon cmo5UAC). The protein is tRNA1(Val) (adenine(37)-N6)-methyltransferase of Musicola paradisiaca (strain Ech703) (Dickeya paradisiaca).